The primary structure comprises 151 residues: Neuroglobin (151 aa).

The 149-residue stretch at 1–149 (MERPESELIR…VVQAMSRGWD (149 aa)) folds into the Globin domain. The heme b site is built by His-64 and His-96.

This sequence belongs to the globin family. Monomer. Homodimer and homotetramer; disulfide-linked. Mainly monomeric but also detected as part of homodimers and homotetramers. Interacts with 14-3-3 proteins; regulates the phosphorylation of NGB. Could interact (ferrous form) with G-alpha(i) proteins (GTP-bound form). Phosphorylated during hypoxia by ERK1/ERK2. Phosphorylation regulates the heme pocket hexacoordination preventing the association of His-64 with the heme metal center. Thereby, promotes the access of dioxygen and nitrite to the heme and stimulates the nitrite reductase activity. Phosphorylation during hypoxia is stabilized by 14-3-3 proteins. Widely distributed throughout the adult brain, including cerebral cortex, hippocampus, thalamus, hypothalamus, olfactory bulb, and cerebellum.

The protein localises to the cytoplasm. It localises to the cytosol. The protein resides in the mitochondrion matrix. The catalysed reaction is Fe(III)-heme b-[protein] + nitric oxide + H2O = Fe(II)-heme b-[protein] + nitrite + 2 H(+). Monomeric globin with a bis-histidyl six-coordinate heme-iron atom through which it can bind dioxygen, carbon monoxide and nitric oxide. Could help transport oxygen and increase its availability to the metabolically active neuronal tissues, though its low quantity in tissues as well as its high affinity for dioxygen, which may limit its oxygen-releasing ability, argue against it. The ferrous/deoxygenated form exhibits a nitrite reductase activity and it could produce nitric oxide which in turn inhibits cellular respiration in response to hypoxia. In its ferrous/deoxygenated state, it may also exhibit GDI (Guanine nucleotide Dissociation Inhibitor) activity toward heterotrimeric G-alpha proteins, thereby regulating signal transduction to facilitate neuroprotective responses in the wake of hypoxia and associated oxidative stress. The chain is Neuroglobin from Rattus norvegicus (Rat).